A 406-amino-acid polypeptide reads, in one-letter code: Cytochrome P450 165C4 (406 aa).

Cys-356 lines the heme pocket.

This sequence belongs to the cytochrome P450 family. Requires heme as cofactor.

It functions in the pathway antibiotic biosynthesis; vancomycin biosynthesis. Involved in the coupling of aromatic side chains of the heptapeptide of vancomycin. The polypeptide is Cytochrome P450 165C4 (cyp165C4) (Amycolatopsis orientalis (Nocardia orientalis)).